The chain runs to 399 residues: Probable 2-isopropylmalate synthase (399 aa).

The Pyruvate carboxyltransferase domain maps to 20–272; the sequence is VRIFDTTLRD…RTGVNTKLLY (253 aa). Residues Asp-29, His-210, His-212, and Asn-246 each contribute to the a divalent metal cation site.

Belongs to the alpha-IPM synthase/homocitrate synthase family. As to quaternary structure, homodimer. The cofactor is a divalent metal cation.

The catalysed reaction is 3-methyl-2-oxobutanoate + acetyl-CoA + H2O = (2S)-2-isopropylmalate + CoA + H(+). It participates in amino-acid biosynthesis; L-leucine biosynthesis; L-leucine from 3-methyl-2-oxobutanoate: step 1/4. In terms of biological role, catalyzes the condensation of the acetyl group of acetyl-CoA with 3-methyl-2-oxobutanoate (2-oxoisovalerate) to form 3-carboxy-3-hydroxy-4-methylpentanoate (2-isopropylmalate). In Ignicoccus hospitalis (strain KIN4/I / DSM 18386 / JCM 14125), this protein is Probable 2-isopropylmalate synthase (leuA).